An 865-amino-acid chain; its full sequence is Anaphase-promoting complex subunit 6 (865 aa).

TPR repeat units lie at residues 11-42 (IEKQ…LNLV), 46-75 (SKEY…LIQK), and 88-149 (EDYQ…LQIL). Residues 153–293 (NDSSENMDDE…NNNNNNNNNF (141 aa)) are disordered. Positions 183–202 (NCDDDDDDDDDDDDDDDDEK) are enriched in acidic residues. The span at 249–292 (NKNNNKNNNNNNNNNNNNNNNNNNNNNNNNNNNNNNNNNNNNNN) shows a compositional bias: low complexity. TPR repeat units follow at residues 300 to 331 (IRSS…ALLT), 336 to 359 (FEAF…LLEK), 366 to 438 (DSWI…DIST), 478 to 506 (DIQT…ILKQ), 515 to 542 (CLMV…LVDS), 573 to 602 (AISW…STTL), 607 to 635 (GASW…TSSR), 642 to 670 (LPLL…AKDI), and 675 to 709 (PMIF…KIKS). Positions 403 to 434 (SNNNTFGANNNNNNNNNNNNNNNNNNNNNSNN) are enriched in low complexity. Positions 403 to 436 (SNNNTFGANNNNNNNNNNNNNNNNNNNNNSNNDI) are disordered. Positions 738–767 (GIGNNNNNNNNRRTTTTTTTTSNNQKKNSS) are disordered. TPR repeat units follow at residues 777–809 (ESWE…SLSL) and 814–843 (PSTY…SLSI).

It belongs to the APC6/CDC16 family. As to quaternary structure, the APC/C is composed of at least 13 subunits that stay tightly associated throughout the cell cycle: anapc1, anapc2, anapc3, anapc4, anapc5, anapc6, anapc7, anapc8, anapc10, anapc11, cdc20, cdc26 and cdh1.

It localises to the nucleus. It participates in protein modification; protein ubiquitination. Component of the anaphase promoting complex/cyclosome (APC/C), a cell cycle-regulated E3 ubiquitin-protein ligase complex that controls progression through mitosis and the G1 phase of the cell cycle. This Dictyostelium discoideum (Social amoeba) protein is Anaphase-promoting complex subunit 6 (anapc6).